The chain runs to 270 residues: Mediator of RNA polymerase II transcription subunit 4 (270 aa).

The disordered stretch occupies residues 1–22 (MAASSSGEKEKERLGGGLGVAG). A2 carries the N-acetylalanine modification. 2 coiled-coil regions span residues 24 to 48 (NSTR…IEML) and 90 to 131 (HHEM…AKEK). Phosphoserine is present on S32. The disordered stretch occupies residues 226-270 (DMSMNMLPPNHSSDFLLEPPGHNKENEDDVEIMSTDSSSSSSESD). Over residues 259–270 (STDSSSSSSESD) the composition is skewed to low complexity.

Belongs to the Mediator complex subunit 4 family. In terms of assembly, component of the Mediator complex, which is composed of MED1, MED4, MED6, MED7, MED8, MED9, MED10, MED11, MED12, MED13, MED13L, MED14, MED15, MED16, MED17, MED18, MED19, MED20, MED21, MED22, MED23, MED24, MED25, MED26, MED27, MED29, MED30, MED31, CCNC, CDK8 and CDC2L6/CDK11. The MED12, MED13, CCNC and CDK8 subunits form a distinct module termed the CDK8 module. Mediator containing the CDK8 module is less active than Mediator lacking this module in supporting transcriptional activation. Individual preparations of the Mediator complex lacking one or more distinct subunits have been variously termed ARC, CRSP, DRIP, PC2, SMCC and TRAP.

The protein localises to the nucleus. Component of the Mediator complex, a coactivator involved in the regulated transcription of nearly all RNA polymerase II-dependent genes. Mediator functions as a bridge to convey information from gene-specific regulatory proteins to the basal RNA polymerase II transcription machinery. Mediator is recruited to promoters by direct interactions with regulatory proteins and serves as a scaffold for the assembly of a functional preinitiation complex with RNA polymerase II and the general transcription factors. This chain is Mediator of RNA polymerase II transcription subunit 4 (MED4), found in Homo sapiens (Human).